The sequence spans 293 residues: Probable porphobilinogen deaminase (293 aa).

Cys-233 carries the S-(dipyrrolylmethanemethyl)cysteine modification.

The protein belongs to the HMBS family. It depends on dipyrromethane as a cofactor.

It carries out the reaction 4 porphobilinogen + H2O = hydroxymethylbilane + 4 NH4(+). Its pathway is porphyrin-containing compound metabolism; protoporphyrin-IX biosynthesis; coproporphyrinogen-III from 5-aminolevulinate: step 2/4. Its function is as follows. Tetrapolymerization of the monopyrrole PBG into the hydroxymethylbilane pre-uroporphyrinogen in several discrete steps. The protein is Probable porphobilinogen deaminase of Saccharolobus islandicus (strain L.S.2.15 / Lassen #1) (Sulfolobus islandicus).